We begin with the raw amino-acid sequence, 176 residues long: Shikimate kinase (176 aa).

Residue 17–24 coordinates ATP; that stretch reads GMMGVGKS.

Belongs to the shikimate kinase family.

The protein localises to the cytoplasm. It catalyses the reaction shikimate + ATP = 3-phosphoshikimate + ADP + H(+). The protein operates within metabolic intermediate biosynthesis; chorismate biosynthesis; chorismate from D-erythrose 4-phosphate and phosphoenolpyruvate: step 5/7. This Zymomonas mobilis subsp. mobilis (strain ATCC 31821 / ZM4 / CP4) protein is Shikimate kinase.